Consider the following 805-residue polypeptide: Leucine--tRNA ligase (805 aa).

Residues 40–51 (PYPSGAGLHVGH) carry the 'HIGH' region motif. A 'KMSKS' region motif is present at residues 576-580 (KMSKS). Lys579 contacts ATP.

This sequence belongs to the class-I aminoacyl-tRNA synthetase family.

It is found in the cytoplasm. It carries out the reaction tRNA(Leu) + L-leucine + ATP = L-leucyl-tRNA(Leu) + AMP + diphosphate. The sequence is that of Leucine--tRNA ligase from Geobacillus kaustophilus (strain HTA426).